A 428-amino-acid polypeptide reads, in one-letter code: Glycine reductase complex component B subunits alpha and beta (428 aa).

Catalysis depends on cysteine 242, which acts as the Schiff-base intermediate with substrate; via pyruvic acid. Position 242 is a pyruvic acid (Cys) (cysteine 242).

In terms of assembly, heterohexamer of two alpha, two beta and two gamma subunits. Component of the glycine reductase complex, together with components A and C. PB is substrate specific. In terms of processing, the peptide chain is cleaved into beta and alpha chains, and the alpha chain N-terminal cysteine is deaminated and oxidized to form a reactive pyruvoyl group.

The enzyme catalyses acetyl phosphate + [thioredoxin]-disulfide + NH4(+) + H2O = [thioredoxin]-dithiol + glycine + phosphate + H(+). Its function is as follows. In the first step of glycine reductase, the substrate is bound to component PB via a Schiff base intermediate. Then the PB-activated substrate is nucleophilically attacked by the selenol anion of component PA to transform it to a carboxymethylated selenoether and the respective amine. By action of component PC, acetyl phosphate is formed, leaving component PA in its oxidized state. Finally component PA becomes reduced by the thioredoxin system to start a new catalytic cycle of reductive deamination. In Peptoclostridium acidaminophilum (Eubacterium acidaminophilum), this protein is Glycine reductase complex component B subunits alpha and beta (grdE).